The primary structure comprises 174 residues: Acetolactate synthase small subunit (174 aa).

The ACT domain maps to T4–N78.

Belongs to the acetolactate synthase small subunit family. As to quaternary structure, dimer of large and small chains.

It is found in the plastid. The protein localises to the chloroplast. It carries out the reaction 2 pyruvate + H(+) = (2S)-2-acetolactate + CO2. Its pathway is amino-acid biosynthesis; L-isoleucine biosynthesis; L-isoleucine from 2-oxobutanoate: step 1/4. It participates in amino-acid biosynthesis; L-valine biosynthesis; L-valine from pyruvate: step 1/4. The sequence is that of Acetolactate synthase small subunit (ilvH) from Pyropia yezoensis (Susabi-nori).